We begin with the raw amino-acid sequence, 200 residues long: NADH-quinone oxidoreductase subunit C (200 aa).

Belongs to the complex I 30 kDa subunit family. In terms of assembly, NDH-1 is composed of 14 different subunits. Subunits NuoB, C, D, E, F, and G constitute the peripheral sector of the complex.

Its subcellular location is the cell inner membrane. The enzyme catalyses a quinone + NADH + 5 H(+)(in) = a quinol + NAD(+) + 4 H(+)(out). NDH-1 shuttles electrons from NADH, via FMN and iron-sulfur (Fe-S) centers, to quinones in the respiratory chain. The immediate electron acceptor for the enzyme in this species is believed to be ubiquinone. Couples the redox reaction to proton translocation (for every two electrons transferred, four hydrogen ions are translocated across the cytoplasmic membrane), and thus conserves the redox energy in a proton gradient. The chain is NADH-quinone oxidoreductase subunit C from Ralstonia pickettii (strain 12J).